Consider the following 207-residue polypeptide: Small ribosomal subunit protein uS4c (207 aa).

In terms of domain architecture, S4 RNA-binding spans 92–155 (MRLDNILFRL…TYQSILSKRI (64 aa)).

The protein belongs to the universal ribosomal protein uS4 family. Part of the 30S ribosomal subunit. Contacts protein S5. The interaction surface between S4 and S5 is involved in control of translational fidelity.

Its subcellular location is the plastid. It is found in the chloroplast. Functionally, one of the primary rRNA binding proteins, it binds directly to 16S rRNA where it nucleates assembly of the body of the 30S subunit. With S5 and S12 plays an important role in translational accuracy. This chain is Small ribosomal subunit protein uS4c (rps4), found in Equisetum giganteum (Giant horsetail).